A 365-amino-acid polypeptide reads, in one-letter code: Neuronal migration protein doublecortin (365 aa).

Residues 11-31 (RDKTSRNMRGSRMNGLPSPTH) are disordered. Threonine 14 is modified (phosphothreonine; by PKC). A Phosphoserine; by CDK5 modification is found at serine 28. Serine 47 is modified (phosphoserine; by MARK1 and PKA). 2 Doublecortin domains span residues 53-139 (KKVR…VEYT) and 180-263 (KLVT…AQDD). At tyrosine 70 the chain carries Phosphotyrosine; by ABL. At serine 74 the chain carries Phosphoserine; by PKC. Phosphoserine; by CK2 is present on serine 90. Serine 110 is modified (phosphoserine; by PKC). Residue serine 115 is modified to Phosphoserine; by CK2, MARK1 and PKA. Residue serine 265 is modified to Phosphoserine; by CK2. The segment at 275–365 (KGNPSATAGP…DDSDSLGDSM (91 aa)) is disordered. At serine 287 the chain carries Phosphoserine; by CDK5. Threonine 289 carries the post-translational modification Phosphothreonine; by CDK5. Serine 294 carries the phosphoserine; by PKC modification. A Phosphoserine; by CDK5 modification is found at serine 297. Serine 306 is subject to Phosphoserine; by CK2. A Phosphoserine; by DYRK2 modification is found at serine 306. Positions 307–341 (PADSGNDQDANGTSSSQLSTPKSKQSPISTPTSPG) are enriched in polar residues. Threonine 326 is modified (phosphothreonine; by CDK5). Threonine 326 carries the phosphothreonine; by PKC and MAPK modification. Serine 332 is subject to Phosphoserine; by CDK5. Position 332 is a phosphoserine; by MAPK (serine 332). Threonine 336 is modified (phosphothreonine; by MAPK). A Phosphoserine; by CDK5 modification is found at serine 339. Position 339 is a phosphoserine; by MAPK (serine 339). Residue serine 342 is modified to Phosphoserine; by PKC. Serine 354 and serine 360 each carry phosphoserine; by CK2. Over residues 356–365 (DDSDSLGDSM) the composition is skewed to acidic residues.

In terms of assembly, interacts with tubulin. Interacts with USP9X. Phosphorylation by MARK1, MARK2 and PKA regulates its ability to bind microtubules. Phosphorylation at Ser-265 and Ser-297 seems to occur only in neonatal brain, the levels falling precipitously by postnatal day 21. Post-translationally, ubiquitinated by MDM2, leading to its degradation by the proteasome. Ubiquitinated by MDM2 and subsequent degradation leads to reduce the dendritic spine density of olfactory bulb granule cells. As to expression, highly expressed in neuronal cells of fetal brain (in the majority of cells of the cortical plate, intermediate zone and ventricular zone), but not expressed in other fetal tissues. In the adult, highly expressed in the brain frontal lobe, but very low expression in other regions of brain, and not detected in heart, placenta, lung, liver, skeletal muscles, kidney and pancreas.

The protein localises to the cytoplasm. The protein resides in the cell projection. Its subcellular location is the neuron projection. Functionally, microtubule-associated protein required for initial steps of neuronal dispersion and cortex lamination during cerebral cortex development. May act by competing with the putative neuronal protein kinase DCLK1 in binding to a target protein. May in that way participate in a signaling pathway that is crucial for neuronal interaction before and during migration, possibly as part of a calcium ion-dependent signal transduction pathway. May be part with PAFAH1B1/LIS-1 of overlapping, but distinct, signaling pathways that promote neuronal migration. This is Neuronal migration protein doublecortin (DCX) from Homo sapiens (Human).